Here is a 325-residue protein sequence, read N- to C-terminus: ATP synthase gamma chain (325 aa).

It belongs to the ATPase gamma chain family. As to quaternary structure, F-type ATPases have 2 components, CF(1) - the catalytic core - and CF(0) - the membrane proton channel. CF(1) has five subunits: alpha(3), beta(3), gamma(1), delta(1), epsilon(1). CF(0) has three main subunits: a, b and c.

The protein localises to the cell membrane. Functionally, produces ATP from ADP in the presence of a proton gradient across the membrane. The gamma chain is believed to be important in regulating ATPase activity and the flow of protons through the CF(0) complex. This Corynebacterium glutamicum (strain R) protein is ATP synthase gamma chain.